Consider the following 361-residue polypeptide: Palmitoyltransferase ZDHHC2 (361 aa).

Residues 1-15 lie on the Cytoplasmic side of the membrane; the sequence is MAPSGSRSFDCWRVL. The helical transmembrane segment at 16 to 36 threads the bilayer; that stretch reads YWIPVLFISLIVAWSYYAYVV. Topologically, residues 37–50 are lumenal; that stretch reads QLCIETIENMGEKT. A helical membrane pass occupies residues 51 to 71; sequence VYLLIYHLLFLMFVWSYWQTI. Over 72 to 167 the chain is Cytoplasmic; it reads YSKPMNPLKE…NNCVGFANYK (96 aa). The 51-residue stretch at 124-174 folds into the DHHC domain; that stretch reads RYCDRCLLLKPDRCHHCSACDMCILKMDHHCPWVNNCVGFANYKFFMLFLA. The active-site S-palmitoyl cysteine intermediate is the cysteine 154. The chain crosses the membrane as a helical span at residues 168-188; that stretch reads FFMLFLAYSLLYCLFVTATDM. The Lumenal portion of the chain corresponds to 189 to 207; the sequence is QYFIQFWTNGLPDTQAKFH. The chain crosses the membrane as a helical span at residues 208–228; it reads IMFLFFAASTFSVSLAFLFAY. Residues 229–361 lie on the Cytoplasmic side of the membrane; the sequence is HCWLVCKNRS…NPALTIEKET (133 aa). The segment at 296-361 is mediates localization to plasma membrane and recycling endosomes; sequence NPDPEQPSIP…NPALTIEKET (66 aa). The segment covering 299–308 has biased composition (pro residues); the sequence is PEQPSIPPGR. Residues 299–361 form a disordered region; that stretch reads PEQPSIPPGR…NPALTIEKET (63 aa). Residues 331-340 are compositionally biased toward polar residues; it reads SRLLNNGQTD. The short motif at 333 to 334 is the Non-canonical dileucine endocytic signal element; it reads LL. The NPxY-like endocytic signal motif lies at 352–355; that stretch reads NPAL.

It belongs to the DHHC palmitoyltransferase family. As to quaternary structure, monomer. Homodimer. The monomeric form has a higher catalytic activity. In terms of processing, autopalmitoylated.

It is found in the endoplasmic reticulum membrane. Its subcellular location is the golgi apparatus membrane. The protein resides in the postsynaptic density. The protein localises to the postsynaptic recycling endosome membrane. It localises to the cell membrane. The catalysed reaction is L-cysteinyl-[protein] + hexadecanoyl-CoA = S-hexadecanoyl-L-cysteinyl-[protein] + CoA. It catalyses the reaction L-cysteinyl-[protein] + tetradecanoyl-CoA = S-tetradecanoyl-L-cysteinyl-[protein] + CoA. The enzyme catalyses L-cysteinyl-[protein] + octadecanoyl-CoA = S-octadecanoyl-L-cysteinyl-[protein] + CoA. Its function is as follows. Palmitoyltransferase that catalyzes the addition of palmitate onto various protein substrates and is involved in a variety of cellular processes. Has no stringent fatty acid selectivity and in addition to palmitate can also transfer onto target proteins myristate from tetradecanoyl-CoA and stearate from octadecanoyl-CoA. This is Palmitoyltransferase ZDHHC2 from Danio rerio (Zebrafish).